Here is a 313-residue protein sequence, read N- to C-terminus: Olfactory receptor 51A2 (313 aa).

Over methionine 1–isoleucine 27 the chain is Extracellular. Asparagine 5 carries an N-linked (GlcNAc...) asparagine glycan. The chain crosses the membrane as a helical span at residues tryptophan 28 to leucine 48. Topologically, residues phenylalanine 49 to serine 56 are cytoplasmic. A helical transmembrane segment spans residues leucine 57–leucine 77. The Extracellular portion of the chain corresponds to serine 78–alanine 101. A disulfide bridge connects residues cysteine 99 and cysteine 191. The chain crosses the membrane as a helical span at residues glutamine 102 to phenylalanine 122. Topologically, residues aspartate 123–valine 141 are cytoplasmic. A helical transmembrane segment spans residues arginine 142–proline 162. Residues phenylalanine 163–valine 198 lie on the Extracellular side of the membrane. The helical transmembrane segment at isoleucine 199–serine 218 threads the bilayer. Topologically, residues tyrosine 219 to alanine 238 are cytoplasmic. Residues leucine 239–leucine 259 form a helical membrane-spanning segment. Topologically, residues alanine 260–asparagine 274 are extracellular. Residues valine 275–valine 295 traverse the membrane as a helical segment. The Cytoplasmic portion of the chain corresponds to lysine 296–isoleucine 313.

Belongs to the G-protein coupled receptor 1 family.

The protein resides in the cell membrane. Functionally, odorant receptor. This chain is Olfactory receptor 51A2 (OR51A2), found in Homo sapiens (Human).